A 260-amino-acid chain; its full sequence is Exosome complex component Rrp4 (260 aa).

The 70-residue stretch at 59 to 128 (NDVVIGIVIV…NSMKVELALR (70 aa)) folds into the S1 motif domain. In terms of domain architecture, KH spans 136–194 (KTGQIVEVEPVKVPRVIGHGGSMISMLKKETNCSIFVGQNGRIWIDGKDDDVELLSKAL).

This sequence belongs to the RRP4 family. As to quaternary structure, component of the archaeal exosome complex. Forms a trimer of Rrp4 and/or Csl4 subunits. The trimer associates with a hexameric ring-like arrangement composed of 3 Rrp41-Rrp42 heterodimers.

Its subcellular location is the cytoplasm. Its function is as follows. Non-catalytic component of the exosome, which is a complex involved in RNA degradation. Increases the RNA binding and the efficiency of RNA degradation. Confers strong poly(A) specificity to the exosome. This is Exosome complex component Rrp4 from Methanosarcina barkeri (strain Fusaro / DSM 804).